A 311-amino-acid polypeptide reads, in one-letter code: tRNA-cytidine(32) 2-sulfurtransferase (311 aa).

The PP-loop motif signature appears at 47 to 52 (SGGKDS). [4Fe-4S] cluster-binding residues include Cys-122, Cys-125, and Cys-213.

It belongs to the TtcA family. Homodimer. Mg(2+) serves as cofactor. Requires [4Fe-4S] cluster as cofactor.

The protein resides in the cytoplasm. The catalysed reaction is cytidine(32) in tRNA + S-sulfanyl-L-cysteinyl-[cysteine desulfurase] + AH2 + ATP = 2-thiocytidine(32) in tRNA + L-cysteinyl-[cysteine desulfurase] + A + AMP + diphosphate + H(+). It participates in tRNA modification. Functionally, catalyzes the ATP-dependent 2-thiolation of cytidine in position 32 of tRNA, to form 2-thiocytidine (s(2)C32). The sulfur atoms are provided by the cysteine/cysteine desulfurase (IscS) system. This Escherichia fergusonii (strain ATCC 35469 / DSM 13698 / CCUG 18766 / IAM 14443 / JCM 21226 / LMG 7866 / NBRC 102419 / NCTC 12128 / CDC 0568-73) protein is tRNA-cytidine(32) 2-sulfurtransferase.